A 172-amino-acid chain; its full sequence is Protein GrpE (172 aa).

A disordered region spans residues 1-24 (MNQDHPEFDSEDLAQNPPETDPLK).

This sequence belongs to the GrpE family. As to quaternary structure, homodimer.

It localises to the cytoplasm. Functionally, participates actively in the response to hyperosmotic and heat shock by preventing the aggregation of stress-denatured proteins, in association with DnaK and GrpE. It is the nucleotide exchange factor for DnaK and may function as a thermosensor. Unfolded proteins bind initially to DnaJ; upon interaction with the DnaJ-bound protein, DnaK hydrolyzes its bound ATP, resulting in the formation of a stable complex. GrpE releases ADP from DnaK; ATP binding to DnaK triggers the release of the substrate protein, thus completing the reaction cycle. Several rounds of ATP-dependent interactions between DnaJ, DnaK and GrpE are required for fully efficient folding. The polypeptide is Protein GrpE (Xanthomonas oryzae pv. oryzae (strain PXO99A)).